Consider the following 657-residue polypeptide: MACVLACVAVLIGAASATASIDFTPIDDGAGLVFERIGALRHVTNQRFLFVQTIDYYPLLQELAKISKFVREPRNNASSCPLVKLVRPGKPRATGGRISKHLASLTQINKEFVSYTLNSADPQNNEVFTDVLEVDYEDTRQQDAAFADAHNPPHWSVVSAADVKELLAVAPPRDRVRVLPHISTANVADKYLKYEACINEERSADNECLYLTEMHGVMASKLADAASFANTLDRLIKQTRRNKLNMTNNVIDDELLLREMRQLSKLLAGHGLGWVVDFERELNAQFDLSQAYKLHLYASQNTVVLCVAMPLVDTAALQYSLYKVATVPFCRGTMCLMMVPAADYIAVTDTRNFYTQVPADFQTQCKAFAGYDEFLCPASQRVPTLDSGECEIEMFMGRYARDIDVQCDMRVADNRPSQVLLGPLVNCRKWVYSFSSNATVSYWCGARDAATVAVPAGVGVVVAQSPLTCSVRVNKDALLFTVDTRSHKAASRAYWPRRRFNYNDYVNTSLLLQTTTSFADTVTDLSAQQLKTLRSRFHIRDYATPRHTFFAPRRSDAAAPDPPHEKPTMLVYVLLGVGVLSALCVVGAYCAFRRYCKQRRSSVVVSFKNDDSQPMVAISNGARAGVHINVPHNNSAPKYEKAFLFPMEIKRTNNKLA.

Residues 1–17 form the signal peptide; the sequence is MACVLACVAVLIGAASA.

This is an uncharacterized protein from Orgyia pseudotsugata (Douglas-fir tussock moth).